The following is a 335-amino-acid chain: Aliphatic sulfonates import ATP-binding protein SsuB (335 aa).

Positions 74 to 293 (VRLTRVSKRY…ARASAAFAAL (220 aa)) constitute an ABC transporter domain. Residue 106–113 (GRSGCGKS) coordinates ATP. Positions 308–335 (APAAPNAAGPEGASRGRAAPASGLRWAV) are disordered.

It belongs to the ABC transporter superfamily. Aliphatic sulfonates importer (TC 3.A.1.17.2) family. The complex is composed of two ATP-binding proteins (SsuB), two transmembrane proteins (SsuC) and a solute-binding protein (SsuA).

The protein resides in the cell inner membrane. The catalysed reaction is ATP + H2O + aliphatic sulfonate-[sulfonate-binding protein]Side 1 = ADP + phosphate + aliphatic sulfonateSide 2 + [sulfonate-binding protein]Side 1.. In terms of biological role, part of the ABC transporter complex SsuABC involved in aliphatic sulfonates import. Responsible for energy coupling to the transport system. This is Aliphatic sulfonates import ATP-binding protein SsuB from Burkholderia mallei (strain ATCC 23344).